Reading from the N-terminus, the 413-residue chain is CinA-like protein (413 aa).

It belongs to the CinA family.

This chain is CinA-like protein, found in Desulfotalea psychrophila (strain LSv54 / DSM 12343).